We begin with the raw amino-acid sequence, 1016 residues long: Nonsense-mediated mRNA decay factor SMG5 (1016 aa).

Residue S2 is modified to N-acetylserine. Phosphoserine is present on residues S2 and S423. Disordered stretches follow at residues 408–561 (NPVP…PSEA) and 594–637 (PTTN…RSCR). Residues 449 to 466 (KSRKFSRLSCLRRRRHPP) show a composition bias toward basic residues. The segment covering 594–603 (PTTNPHTSAS) has biased composition (polar residues). A compositionally biased stretch (acidic residues) spans 619 to 628 (ASEEGSESEG). Residues 798–841 (QSEQESLLQQAQAQFRMAQEEARRNRLMRDMAQLRLQLEVSQLE) are a coiled coil. Residues 872–995 (RQLATSGRFI…GPMQAALQAA (124 aa)) enclose the PINc domain.

In terms of assembly, interacts with TERT, PPP2CA and SMG1. Part of a complex that contains SMG1, SMG5, SMG7, PPP2CA, a short isoform of UPF3A (isoform UPF3AS, but not isoform UPF3AL) and phosphorylated UPF1. Not detected in complexes that contain unphosphorylated UPF1. In terms of tissue distribution, ubiquitous.

The protein localises to the cytoplasm. It localises to the nucleus. Plays a role in nonsense-mediated mRNA decay. Does not have RNase activity by itself. Promotes dephosphorylation of UPF1. Together with SMG7 is thought to provide a link to the mRNA degradation machinery involving exonucleolytic pathways, and to serve as an adapter for UPF1 to protein phosphatase 2A (PP2A), thereby triggering UPF1 dephosphorylation. Necessary for TERT activity. The protein is Nonsense-mediated mRNA decay factor SMG5 of Homo sapiens (Human).